The chain runs to 494 residues: UDP-glucose 6-dehydrogenase (494 aa).

Residues 11–16, D36, R41, 89–93, and 130–132 each bind NAD(+); these read GAGYVG, VNTPT, and STV. Positions 88–110 are disordered; that stretch reads SVNTPTKTYGMGKGRAADLKYIE. The interval 129 to 135 is allosteric switch region; that stretch reads KSTVPVR. E161 acts as the Proton donor/acceptor in catalysis. Substrate-binding positions include 161 to 165, 220 to 224, R260, and 267 to 273; these read EFLAE, KLAAN, and KASVGFG. E165 is an NAD(+) binding site. K220 serves as the catalytic Proton donor/acceptor. The Nucleophile role is filled by C276. 276 to 279 contacts NAD(+); that stretch reads CFQK. The important for formation of active hexamer structure stretch occupies residues 321–325; sequence SLFNT. Residue 338–339 participates in substrate binding; sequence FK. R346 contributes to the NAD(+) binding site. Position 442 (R442) interacts with substrate. The disordered stretch occupies residues 466-494; the sequence is VSAKRIPFASSCEIPKFSLQDPPVKKPRV.

It belongs to the UDP-glucose/GDP-mannose dehydrogenase family. Homohexamer.

The enzyme catalyses UDP-alpha-D-glucose + 2 NAD(+) + H2O = UDP-alpha-D-glucuronate + 2 NADH + 3 H(+). It functions in the pathway nucleotide-sugar biosynthesis; UDP-alpha-D-glucuronate biosynthesis; UDP-alpha-D-glucuronate from UDP-alpha-D-glucose: step 1/1. UDP-alpha-D-xylose (UDX) acts as a feedback inhibitor. It binds at the same site as the substrate, but functions as allosteric inhibitor by triggering a conformation change that disrupts the active hexameric ring structure and gives rise to an inactive, horseshoe-shaped hexamer. Catalyzes the formation of UDP-alpha-D-glucuronate, a constituent of complex glycosaminoglycans. Required for the biosynthesis of chondroitin sulfate and heparan sulfate. Required for embryonic development via its role in the biosynthesis of glycosaminoglycans. The sequence is that of UDP-glucose 6-dehydrogenase (UGDH) from Gallus gallus (Chicken).